The sequence spans 901 residues: Probable inorganic carbon transporter subunit DabA (901 aa).

Zn(2+) is bound by residues Cys424, Asp426, His606, and Cys621.

It belongs to the inorganic carbon transporter (TC 9.A.2) DabA family. In terms of assembly, forms a complex with DabB. It depends on Zn(2+) as a cofactor.

The protein localises to the cell membrane. In terms of biological role, part of an energy-coupled inorganic carbon pump. This Staphylococcus aureus (strain Mu3 / ATCC 700698) protein is Probable inorganic carbon transporter subunit DabA.